A 1199-amino-acid polypeptide reads, in one-letter code: DNA-directed RNA polymerase subunit beta' (1199 aa).

Zn(2+) contacts are provided by cysteine 60, cysteine 62, cysteine 75, and cysteine 78. Residues aspartate 449, aspartate 451, and aspartate 453 each contribute to the Mg(2+) site. Zn(2+) contacts are provided by cysteine 818, cysteine 892, cysteine 899, and cysteine 902.

The protein belongs to the RNA polymerase beta' chain family. As to quaternary structure, the RNAP catalytic core consists of 2 alpha, 1 beta, 1 beta' and 1 omega subunit. When a sigma factor is associated with the core the holoenzyme is formed, which can initiate transcription. The cofactor is Mg(2+). It depends on Zn(2+) as a cofactor.

It carries out the reaction RNA(n) + a ribonucleoside 5'-triphosphate = RNA(n+1) + diphosphate. Functionally, DNA-dependent RNA polymerase catalyzes the transcription of DNA into RNA using the four ribonucleoside triphosphates as substrates. This chain is DNA-directed RNA polymerase subunit beta', found in Bacillus pumilus (strain SAFR-032).